Reading from the N-terminus, the 379-residue chain is Homoserine O-succinyltransferase (379 aa).

The AB hydrolase-1 domain occupies 51–360 (NAVLICHALS…DSPYGHDAFL (310 aa)). The Nucleophile role is filled by Ser157. Arg227 serves as a coordination point for substrate. Active-site residues include Asp323 and His356. Asp357 serves as a coordination point for substrate.

This sequence belongs to the AB hydrolase superfamily. MetX family. As to quaternary structure, homodimer.

The protein localises to the cytoplasm. It catalyses the reaction L-homoserine + succinyl-CoA = O-succinyl-L-homoserine + CoA. Its pathway is amino-acid biosynthesis; L-methionine biosynthesis via de novo pathway; O-succinyl-L-homoserine from L-homoserine: step 1/1. Transfers a succinyl group from succinyl-CoA to L-homoserine, forming succinyl-L-homoserine. This is Homoserine O-succinyltransferase from Pseudomonas entomophila (strain L48).